The primary structure comprises 188 residues: Elongation factor P (188 aa).

It belongs to the elongation factor P family.

It localises to the cytoplasm. The protein operates within protein biosynthesis; polypeptide chain elongation. In terms of biological role, involved in peptide bond synthesis. Stimulates efficient translation and peptide-bond synthesis on native or reconstituted 70S ribosomes in vitro. Probably functions indirectly by altering the affinity of the ribosome for aminoacyl-tRNA, thus increasing their reactivity as acceptors for peptidyl transferase. The protein is Elongation factor P of Mycoplasma mobile (strain ATCC 43663 / 163K / NCTC 11711) (Mesomycoplasma mobile).